The chain runs to 375 residues: Histidine biosynthesis bifunctional protein HisB (375 aa).

Positions 1-168 (MTPILFVDRD…GIAHELADAP (168 aa)) are histidinol-phosphatase. The active-site Nucleophile is aspartate 8. Mg(2+) contacts are provided by aspartate 8, aspartate 10, and aspartate 128. Aspartate 10 serves as the catalytic Proton donor. An imidazoleglycerol-phosphate dehydratase region spans residues 169-375 (RRAVVQRNTK…TALPSTKGAL (207 aa)).

It in the N-terminal section; belongs to the histidinol-phosphatase family. This sequence in the C-terminal section; belongs to the imidazoleglycerol-phosphate dehydratase family. Mg(2+) is required as a cofactor.

The protein localises to the cytoplasm. The enzyme catalyses D-erythro-1-(imidazol-4-yl)glycerol 3-phosphate = 3-(imidazol-4-yl)-2-oxopropyl phosphate + H2O. It carries out the reaction L-histidinol phosphate + H2O = L-histidinol + phosphate. Its pathway is amino-acid biosynthesis; L-histidine biosynthesis; L-histidine from 5-phospho-alpha-D-ribose 1-diphosphate: step 6/9. It functions in the pathway amino-acid biosynthesis; L-histidine biosynthesis; L-histidine from 5-phospho-alpha-D-ribose 1-diphosphate: step 8/9. The sequence is that of Histidine biosynthesis bifunctional protein HisB from Xanthomonas campestris pv. campestris (strain 8004).